A 279-amino-acid polypeptide reads, in one-letter code: Phage-like element PBSX protein XepA (279 aa).

It to B.subtilis YqxG/YqdC.

Its function is as follows. Not known; does not seem to be involved in host cell lysis. In Bacillus subtilis (strain 168), this protein is Phage-like element PBSX protein XepA (xepA).